The following is a 569-amino-acid chain: MYCDSFFMSRLLSLAQLSGSSWSSICLVCVTSLVFWRIKIAVTQYIRLRHIPSPSIFAAVSYIWLARTTYSGKQYWIHRDLHRQHGPLVRIGPNEITTDDPEILKKIASSGSTYSRGTWYLTGRFNPYHDNLFTILDPFAHKKAKTRSMPAYLGRDTPGLEVIINDKVKQLISILQRRYLAVLPGQDPPLVDLGLISNYFTMDVITHLAFGHQVGYLQDEKDHYNFLGSVRKLWPQMSTSADVPWIRNILFSRPVLRFLGPKHTDKKGFGALMGAAKQHVDRRFDSGEERKHDMLESLMKRGFTRQECEIEGLFLLLSGTESTACAIRQILVHVITAPSVYAKLKQEIDSTCQGRGISYPIQLAEAKRLPYLQAVIYEGIRMRPPLLGLFPKVVPEPGETFHGQFIPAGTSICTNGSSLLRSKSLFGADADLYNPGRFMELSKERREEMERNVELAFGHGQWMCAGKTIAFMELNKVVFEKHCQFFRAFDMQLHSPLKPCEVESYAGLIAKPPAKSSDLSMISRVTDMSRGINPCYRYPPQYRTHLKTHMLNVPSGSNFIRMPIVLPST.

Residue Cys-464 participates in heme binding.

The protein belongs to the cytochrome P450 family. It depends on heme as a cofactor.

It participates in hormone biosynthesis. Cytochrome P450 monooxygenase; part of the gene cluster that mediates the biosynthesis of abscisic acid (ABA), a phytohormone that acts antagonistically toward salicylic acid (SA), jasmonic acid (JA) and ethylene (ETH) signaling, to impede plant defense responses. The first step of the pathway catalyzes the reaction from farnesyl diphosphate to alpha-ionylideneethane performed by the alpha-ionylideneethane synthase abl3 via a three-step reaction mechanism involving 2 neutral intermediates, beta-farnesene and allofarnesene. The cytochrome P450 monooxygenase abl1 might then be involved in the conversion of alpha-ionylideneethane to alpha-ionylideneacetic acid. Alpha-ionylideneacetic acid is further converted to abscisic acid in 2 steps involving the cytochrome P450 monooxygenase abl2 and the short-chain dehydrogenase/reductase abl4, via the intermediates 1'-deoxy-ABA or 1',4'-trans-diol-ABA, depending on the order of action of these 2 enzymes. Abl2 is responsible for the hydroxylation of carbon atom C-1' and abl4 might be involved in the oxidation of the C-4' carbon atom. The polypeptide is Cytochrome P450 monooxygenase abl1 (Leptosphaeria maculans (strain JN3 / isolate v23.1.3 / race Av1-4-5-6-7-8) (Blackleg fungus)).